The chain runs to 209 residues: Large ribosomal subunit protein bL25 (209 aa).

This sequence belongs to the bacterial ribosomal protein bL25 family. CTC subfamily. Part of the 50S ribosomal subunit; part of the 5S rRNA/L5/L18/L25 subcomplex. Contacts the 5S rRNA. Binds to the 5S rRNA independently of L5 and L18.

Its function is as follows. This is one of the proteins that binds to the 5S RNA in the ribosome where it forms part of the central protuberance. The sequence is that of Large ribosomal subunit protein bL25 from Chlorobium phaeobacteroides (strain BS1).